A 432-amino-acid polypeptide reads, in one-letter code: Luc7-like protein 3 (432 aa).

Methionine 1 carries the post-translational modification N-acetylmethionine. 3 positions are modified to phosphoserine: serine 3, serine 110, and serine 115. The stretch at lysine 124–serine 181 forms a coiled coil. The residue at position 231 (lysine 231) is an N6-acetyllysine. Residues leucine 234–arginine 287 are compositionally biased toward basic and acidic residues. Residues leucine 234–asparagine 432 form a disordered region. Over residues glutamate 288–serine 301 the composition is skewed to basic residues. Over residues arginine 302–serine 311 the composition is skewed to basic and acidic residues. Over residues arginine 312–serine 367 the composition is skewed to basic residues. Over residues arginine 368 to asparagine 414 the composition is skewed to basic and acidic residues. Serine 420 bears the Phosphoserine mark. A compositionally biased stretch (basic and acidic residues) spans glutamate 421–asparagine 432. Residue lysine 424 forms a Glycyl lysine isopeptide (Lys-Gly) (interchain with G-Cter in SUMO1); alternate linkage. A Glycyl lysine isopeptide (Lys-Gly) (interchain with G-Cter in SUMO2); alternate cross-link involves residue lysine 424. 2 positions are modified to phosphoserine: serine 425 and serine 431.

Belongs to the Luc7 family. As to quaternary structure, may interact with SFRS1 and form homodimers. Interacts with JMJD6. Interacts with RBM25. Interacts with RSRC1 (via Arg/Ser-rich domain). Interacts with RRP1B.

The protein localises to the nucleus speckle. Its function is as follows. Binds cAMP regulatory element DNA sequence. May play a role in RNA splicing. The sequence is that of Luc7-like protein 3 (LUC7L3) from Bos taurus (Bovine).